We begin with the raw amino-acid sequence, 486 residues long: Protein hold'em (486 aa).

Positions 166-285 form a DNA-binding region, OB; sequence IITTNVNLLV…DCRLLLAFAA (120 aa).

Belongs to the MEIOB family. Interacts with mei-9 and Ercc1.

Its function is as follows. Single-stranded DNA-binding protein required for meiosis. May be involved in the resolution of recombination intermediates into crossovers in the meiotic recombination pathway. This is Protein hold'em (hdm) from Drosophila melanogaster (Fruit fly).